The following is a 244-amino-acid chain: Claudin-12 (244 aa).

The Cytoplasmic portion of the chain corresponds to 1 to 10; the sequence is MGCRDVHAAT. Residues 11–31 form a helical membrane-spanning segment; the sequence is VLSFLCGIASVAGLFAGTLLP. The Extracellular segment spans residues 32–87; that stretch reads NWRKLRLITFNRNEKNLTVYTGLWVKCARYDGSSDCLMYDTTWYSSVDQLDLRVLQ. The helical transmembrane segment at 88-108 threads the bilayer; the sequence is FALPLSMLIAMGALLLCLIGM. The Cytoplasmic portion of the chain corresponds to 109 to 135; the sequence is CNTAFRSSVPNIKLAKCLVNSAGCHLV. A helical transmembrane segment spans residues 136–156; sequence AGLLFFLAGTVSLSPSIWVIF. Topologically, residues 157 to 174 are extracellular; sequence YNIHLNKKFEPVFSFDYA. The helical transmembrane segment at 175 to 195 threads the bilayer; it reads VYVTIASAGGLFMTSLILFIW. The Cytoplasmic portion of the chain corresponds to 196-244; that stretch reads YCTCKSLPSPFWQPLYSHPPSMHTYSQPYSARSRLSAIEIDIPVVSHTT. Serine 228 and serine 231 each carry phosphoserine.

It belongs to the claudin family. In terms of assembly, interacts with OCLN.

The protein resides in the cell junction. The protein localises to the tight junction. It is found in the cell membrane. In terms of biological role, plays a major role in tight junction-specific obliteration of the intercellular space, through calcium-independent cell-adhesion activity. The sequence is that of Claudin-12 (CLDN12) from Pongo abelii (Sumatran orangutan).